Reading from the N-terminus, the 280-residue chain is 4-diphosphocytidyl-2-C-methyl-D-erythritol kinase (280 aa).

Lys8 is an active-site residue. 91–101 serves as a coordination point for ATP; sequence PIEAGLAGGSS. Residue Asp133 is part of the active site.

It belongs to the GHMP kinase family. IspE subfamily.

The catalysed reaction is 4-CDP-2-C-methyl-D-erythritol + ATP = 4-CDP-2-C-methyl-D-erythritol 2-phosphate + ADP + H(+). It functions in the pathway isoprenoid biosynthesis; isopentenyl diphosphate biosynthesis via DXP pathway; isopentenyl diphosphate from 1-deoxy-D-xylulose 5-phosphate: step 3/6. Functionally, catalyzes the phosphorylation of the position 2 hydroxy group of 4-diphosphocytidyl-2C-methyl-D-erythritol. This chain is 4-diphosphocytidyl-2-C-methyl-D-erythritol kinase, found in Clostridium tetani (strain Massachusetts / E88).